The chain runs to 839 residues: Probable inorganic carbon transporter subunit DabA (839 aa).

Cys-353, Asp-355, His-537, and Cys-552 together coordinate Zn(2+).

It belongs to the inorganic carbon transporter (TC 9.A.2) DabA family. In terms of assembly, forms a complex with DabB. It depends on Zn(2+) as a cofactor.

The protein resides in the cell membrane. Functionally, part of an energy-coupled inorganic carbon pump. This chain is Probable inorganic carbon transporter subunit DabA, found in Chloroflexus aggregans (strain MD-66 / DSM 9485).